The sequence spans 498 residues: Protein flp (498 aa).

4 consecutive transmembrane segments (helical) span residues 6-26, 389-409, 433-453, and 471-491; these read LYFLSISIIILVAISIAIHIT, FNIVTVLMTTLILLAFIFSAY, LTLCLCIAIALILYALPYLIL, and LALITTLIALFSTLIVILLFL.

The protein localises to the cell membrane. Its precise function is unknown. Has no penicillin-binding activity and is not involved in methicillin resistance. The protein is Protein flp (flp) of Staphylococcus aureus (strain MW2).